The sequence spans 250 residues: 3-deoxy-manno-octulosonate cytidylyltransferase (250 aa).

The protein belongs to the KdsB family.

Its subcellular location is the cytoplasm. It catalyses the reaction 3-deoxy-alpha-D-manno-oct-2-ulosonate + CTP = CMP-3-deoxy-beta-D-manno-octulosonate + diphosphate. It participates in nucleotide-sugar biosynthesis; CMP-3-deoxy-D-manno-octulosonate biosynthesis; CMP-3-deoxy-D-manno-octulosonate from 3-deoxy-D-manno-octulosonate and CTP: step 1/1. Its pathway is bacterial outer membrane biogenesis; lipopolysaccharide biosynthesis. Functionally, activates KDO (a required 8-carbon sugar) for incorporation into bacterial lipopolysaccharide in Gram-negative bacteria. The protein is 3-deoxy-manno-octulosonate cytidylyltransferase of Francisella tularensis subsp. holarctica (strain FTNF002-00 / FTA).